Here is a 746-residue protein sequence, read N- to C-terminus: Methyl-CpG-binding domain-containing protein 13 (746 aa).

2 consecutive short sequence motifs (nuclear localization signal) follow at residues 13–20 and 44–51; these read ERKVEIRV and IKKLEITN. In terms of domain architecture, MBD spans 29-104; sequence VIVEKSAAQG…KESDIEDDDS (76 aa). 6 disordered regions span residues 131-157, 169-283, 295-328, 348-479, 518-562, and 696-746; these read IDDV…MTSD, LGKK…PTPE, PLDD…KTRT, TKVQ…LKSP, TAAG…SGSA, and EPDT…FSKD. Over residues 169 to 180 the composition is skewed to basic and acidic residues; it reads LGKKEEVKDPIE. Residues 190 to 199 show a composition bias toward polar residues; sequence RSQTKASTTE. The segment covering 244 to 260 has biased composition (basic and acidic residues); the sequence is SSEKRITRSKVEEKKNE. The short motif at 256–263 is the Nuclear localization signal element; it reads EKKNELSN. Residues 427–451 show a composition bias toward polar residues; it reads VAQSCNEQSSQKPHAAAATSNNRVS. Residues 465–476 are compositionally biased toward basic residues; the sequence is VGRKPSKDKKTL. Composition is skewed to polar residues over residues 529 to 546 and 702 to 730; these read PKAN…SPLR and KSQG…TNKT. The segment covering 732-746 has biased composition (basic and acidic residues); it reads GKPDDLRFTQSFSKD.

The protein localises to the nucleus. Its function is as follows. Probable transcriptional regulator. In Arabidopsis thaliana (Mouse-ear cress), this protein is Methyl-CpG-binding domain-containing protein 13 (MBD13).